A 206-amino-acid chain; its full sequence is Ribosomal RNA large subunit methyltransferase E (206 aa).

S-adenosyl-L-methionine-binding residues include glycine 61, tryptophan 63, aspartate 81, aspartate 97, and aspartate 122. The active-site Proton acceptor is the lysine 162.

The protein belongs to the class I-like SAM-binding methyltransferase superfamily. RNA methyltransferase RlmE family.

It localises to the cytoplasm. The enzyme catalyses uridine(2552) in 23S rRNA + S-adenosyl-L-methionine = 2'-O-methyluridine(2552) in 23S rRNA + S-adenosyl-L-homocysteine + H(+). Its function is as follows. Specifically methylates the uridine in position 2552 of 23S rRNA at the 2'-O position of the ribose in the fully assembled 50S ribosomal subunit. The protein is Ribosomal RNA large subunit methyltransferase E of Neisseria gonorrhoeae (strain NCCP11945).